Reading from the N-terminus, the 92-residue chain is Sugar fermentation stimulation protein B (92 aa).

The H-T-H motif DNA-binding region spans 50–69 (EMIIAKALGTDPWVIWPSRY).

This sequence belongs to the ner transcriptional regulatory family.

Its function is as follows. This protein is involved in positive regulation of the metabolism of sugars. This is Sugar fermentation stimulation protein B (sfsB) from Escherichia coli O157:H7.